The following is a 295-amino-acid chain: Protoheme IX farnesyltransferase 2 (295 aa).

The next 9 helical transmembrane spans lie at 9–29, 36–56, 83–103, 108–128, 135–155, 163–183, 209–229, 230–250, and 264–284; these read ITKP…FFLA, FALF…GCVF, LTLA…LLYV, LAAF…SLWL, GTLV…CAVS, VTLL…IAIF, IVLY…GGYA, GLGY…MAWG, and VFGF…VDSQ.

The protein belongs to the UbiA prenyltransferase family. Protoheme IX farnesyltransferase subfamily.

It is found in the cell inner membrane. The enzyme catalyses heme b + (2E,6E)-farnesyl diphosphate + H2O = Fe(II)-heme o + diphosphate. It participates in porphyrin-containing compound metabolism; heme O biosynthesis; heme O from protoheme: step 1/1. Its function is as follows. Converts heme B (protoheme IX) to heme O by substitution of the vinyl group on carbon 2 of heme B porphyrin ring with a hydroxyethyl farnesyl side group. This is Protoheme IX farnesyltransferase 2 from Pseudomonas entomophila (strain L48).